Reading from the N-terminus, the 341-residue chain is UDP-3-O-acylglucosamine N-acyltransferase (341 aa).

Catalysis depends on His-241, which acts as the Proton acceptor.

This sequence belongs to the transferase hexapeptide repeat family. LpxD subfamily. In terms of assembly, homotrimer.

It carries out the reaction a UDP-3-O-[(3R)-3-hydroxyacyl]-alpha-D-glucosamine + a (3R)-hydroxyacyl-[ACP] = a UDP-2-N,3-O-bis[(3R)-3-hydroxyacyl]-alpha-D-glucosamine + holo-[ACP] + H(+). It participates in bacterial outer membrane biogenesis; LPS lipid A biosynthesis. Catalyzes the N-acylation of UDP-3-O-acylglucosamine using 3-hydroxyacyl-ACP as the acyl donor. Is involved in the biosynthesis of lipid A, a phosphorylated glycolipid that anchors the lipopolysaccharide to the outer membrane of the cell. This is UDP-3-O-acylglucosamine N-acyltransferase from Mannheimia succiniciproducens (strain KCTC 0769BP / MBEL55E).